The primary structure comprises 601 residues: Glutamine--fructose-6-phosphate aminotransferase [isomerizing] (601 aa).

C2 (nucleophile; for GATase activity) is an active-site residue. Positions 2–218 constitute a Glutamine amidotransferase type-2 domain; sequence CGIVGYIGYD…DHEIVIVKKD (217 aa). SIS domains lie at 284–423 and 453–591; these read IIND…EHGR and IATD…VDKP. K596 functions as the For Fru-6P isomerization activity in the catalytic mechanism.

As to quaternary structure, homodimer.

The protein resides in the cytoplasm. It carries out the reaction D-fructose 6-phosphate + L-glutamine = D-glucosamine 6-phosphate + L-glutamate. Catalyzes the first step in hexosamine metabolism, converting fructose-6P into glucosamine-6P using glutamine as a nitrogen source. The chain is Glutamine--fructose-6-phosphate aminotransferase [isomerizing] from Staphylococcus aureus (strain MRSA252).